The sequence spans 382 residues: S-adenosylmethionine synthase (382 aa).

Histidine 16 provides a ligand contact to ATP. Residue aspartate 18 participates in Mg(2+) binding. Glutamate 44 lines the K(+) pocket. L-methionine contacts are provided by glutamate 57 and glutamine 100. A flexible loop region spans residues 100–110 (QSPDIAQGVDN). ATP is bound by residues 165–167 (DAK), 231–232 (RF), aspartate 240, 246–247 (RK), and lysine 267. Aspartate 240 contacts L-methionine. L-methionine is bound at residue lysine 271.

This sequence belongs to the AdoMet synthase family. Homotetramer; dimer of dimers. Requires Mg(2+) as cofactor. It depends on K(+) as a cofactor.

It localises to the cytoplasm. It carries out the reaction L-methionine + ATP + H2O = S-adenosyl-L-methionine + phosphate + diphosphate. It participates in amino-acid biosynthesis; S-adenosyl-L-methionine biosynthesis; S-adenosyl-L-methionine from L-methionine: step 1/1. Its function is as follows. Catalyzes the formation of S-adenosylmethionine (AdoMet) from methionine and ATP. The overall synthetic reaction is composed of two sequential steps, AdoMet formation and the subsequent tripolyphosphate hydrolysis which occurs prior to release of AdoMet from the enzyme. The polypeptide is S-adenosylmethionine synthase (Legionella pneumophila subsp. pneumophila (strain Philadelphia 1 / ATCC 33152 / DSM 7513)).